The sequence spans 320 residues: NAC domain-containing protein 20 (320 aa).

An NAC domain is found at 14-170 (LPPGFRFHPT…DWAVCRIFHK (157 aa)). Residues 114–176 (IGMKKTLVFY…IFHKSSGIKK (63 aa)) mediate DNA binding.

Forms homodimers. Forms heterodimers with NAC26. Expressed in developing seeds.

It is found in the nucleus. It localises to the endoplasmic reticulum. In terms of biological role, transcription factor that acts redundantly with NAC26 to regulate the expression of genes involved in the biosynthesis of starch and storage proteins in grain. Directly binds to the promoters of starch synthase 1 (SS1), pullulanase (PUL), glutelin A1 (GLUA1), glutelins B4 and B5 (GLUB4 and GLUB5), alpha-globulin and 16 kDa prolamin, and activates their expression. Possesses transactivation activity in yeast. The chain is NAC domain-containing protein 20 from Oryza sativa subsp. indica (Rice).